The following is a 488-amino-acid chain: UDP-N-acetylmuramoyl-L-alanyl-D-glutamate--2,6-diaminopimelate ligase (488 aa).

Ser31 lines the UDP-N-acetyl-alpha-D-muramoyl-L-alanyl-D-glutamate pocket. Position 109 to 115 (109 to 115) interacts with ATP; that stretch reads GTNGKTS. UDP-N-acetyl-alpha-D-muramoyl-L-alanyl-D-glutamate is bound by residues Asn150, 151-152, Ser178, and Arg186; that span reads TT. At Lys218 the chain carries N6-carboxylysine. Meso-2,6-diaminopimelate is bound by residues Arg384, 408–411, Gly458, and Glu462; that span reads DNPR. The short motif at 408 to 411 is the Meso-diaminopimelate recognition motif element; sequence DNPR.

Belongs to the MurCDEF family. MurE subfamily. It depends on Mg(2+) as a cofactor. Post-translationally, carboxylation is probably crucial for Mg(2+) binding and, consequently, for the gamma-phosphate positioning of ATP.

The protein localises to the cytoplasm. The enzyme catalyses UDP-N-acetyl-alpha-D-muramoyl-L-alanyl-D-glutamate + meso-2,6-diaminopimelate + ATP = UDP-N-acetyl-alpha-D-muramoyl-L-alanyl-gamma-D-glutamyl-meso-2,6-diaminopimelate + ADP + phosphate + H(+). The protein operates within cell wall biogenesis; peptidoglycan biosynthesis. Its function is as follows. Catalyzes the addition of meso-diaminopimelic acid to the nucleotide precursor UDP-N-acetylmuramoyl-L-alanyl-D-glutamate (UMAG) in the biosynthesis of bacterial cell-wall peptidoglycan. The protein is UDP-N-acetylmuramoyl-L-alanyl-D-glutamate--2,6-diaminopimelate ligase of Bacillus licheniformis (strain ATCC 14580 / DSM 13 / JCM 2505 / CCUG 7422 / NBRC 12200 / NCIMB 9375 / NCTC 10341 / NRRL NRS-1264 / Gibson 46).